Reading from the N-terminus, the 261-residue chain is Phosphatidylglycerol--prolipoprotein diacylglyceryl transferase (261 aa).

4 consecutive transmembrane segments (helical) span residues I12 to A32, I41 to A61, G87 to F107, and L112 to I132. A 1,2-diacyl-sn-glycero-3-phospho-(1'-sn-glycerol) is bound at residue R134. Helical transmembrane passes span Q170–L190, G200–M220, and G229–I249.

Belongs to the Lgt family.

The protein resides in the cell membrane. It catalyses the reaction L-cysteinyl-[prolipoprotein] + a 1,2-diacyl-sn-glycero-3-phospho-(1'-sn-glycerol) = an S-1,2-diacyl-sn-glyceryl-L-cysteinyl-[prolipoprotein] + sn-glycerol 1-phosphate + H(+). It functions in the pathway protein modification; lipoprotein biosynthesis (diacylglyceryl transfer). Catalyzes the transfer of the diacylglyceryl group from phosphatidylglycerol to the sulfhydryl group of the N-terminal cysteine of a prolipoprotein, the first step in the formation of mature lipoproteins. This is Phosphatidylglycerol--prolipoprotein diacylglyceryl transferase from Streptococcus sanguinis (strain SK36).